Here is a 229-residue protein sequence, read N- to C-terminus: Demethylmenaquinone methyltransferase (229 aa).

S-adenosyl-L-methionine contacts are provided by residues Thr-62, Asp-80, 100 to 101, and Ser-117; that span reads DG.

Belongs to the class I-like SAM-binding methyltransferase superfamily. MenG/UbiE family.

The catalysed reaction is a 2-demethylmenaquinol + S-adenosyl-L-methionine = a menaquinol + S-adenosyl-L-homocysteine + H(+). It participates in quinol/quinone metabolism; menaquinone biosynthesis; menaquinol from 1,4-dihydroxy-2-naphthoate: step 2/2. Methyltransferase required for the conversion of demethylmenaquinol (DMKH2) to menaquinol (MKH2). This Corynebacterium kroppenstedtii (strain DSM 44385 / JCM 11950 / CIP 105744 / CCUG 35717) protein is Demethylmenaquinone methyltransferase.